A 380-amino-acid polypeptide reads, in one-letter code: Beta sliding clamp (380 aa).

The protein belongs to the beta sliding clamp family. In terms of assembly, forms a ring-shaped head-to-tail homodimer around DNA which binds and tethers DNA polymerases and other proteins to the DNA. The DNA replisome complex has a single clamp-loading complex (3 tau and 1 each of delta, delta', psi and chi subunits) which binds 3 Pol III cores (1 core on the leading strand and 2 on the lagging strand) each with a beta sliding clamp dimer. Additional proteins in the replisome are other copies of gamma, psi and chi, Ssb, DNA helicase and RNA primase.

The protein localises to the cytoplasm. Functionally, confers DNA tethering and processivity to DNA polymerases and other proteins. Acts as a clamp, forming a ring around DNA (a reaction catalyzed by the clamp-loading complex) which diffuses in an ATP-independent manner freely and bidirectionally along dsDNA. Initially characterized for its ability to contact the catalytic subunit of DNA polymerase III (Pol III), a complex, multichain enzyme responsible for most of the replicative synthesis in bacteria; Pol III exhibits 3'-5' exonuclease proofreading activity. The beta chain is required for initiation of replication as well as for processivity of DNA replication. This is Beta sliding clamp (dnaN) from Mycoplasma pneumoniae (strain ATCC 29342 / M129 / Subtype 1) (Mycoplasmoides pneumoniae).